The sequence spans 551 residues: Hedycaryol synthase TPS20CT (551 aa).

Residues Arg-266, Asp-303, Asp-307, Arg-444, and Asp-447 each contribute to the (2E,6E)-farnesyl diphosphate site. Mg(2+) contacts are provided by Asp-303 and Asp-307. A DDXXD motif motif is present at residues 303–307; that stretch reads DDIYD. Asp-447, Ser-451, and Glu-455 together coordinate Mg(2+).

Belongs to the terpene synthase family. Tpsb subfamily. Requires Mg(2+) as cofactor. The cofactor is Mn(2+). Highly expressed in glandular trichomes.

The catalysed reaction is (2E,6E)-farnesyl diphosphate + H2O = (2E,6E)-hedycaryol + diphosphate. It functions in the pathway secondary metabolite biosynthesis; terpenoid biosynthesis. Functionally, involved in sesquiterpene olefins biosynthesis, constituants of cannabinoids and terpenoids-rich resins. Catalyzes primarily the conversion of (2E)-farnesyl diphosphate to hedycaryol, which is spontaneously converted to elemol as a thermal degradation product. This is Hedycaryol synthase TPS20CT from Cannabis sativa (Hemp).